Here is a 158-residue protein sequence, read N- to C-terminus: Transcription elongation factor GreB (158 aa).

Residues 53-75 (KRRLREIDRRVRFLTKRLEVLQI) adopt a coiled-coil conformation.

This sequence belongs to the GreA/GreB family. GreB subfamily.

Functionally, necessary for efficient RNA polymerase transcription elongation past template-encoded arresting sites. The arresting sites in DNA have the property of trapping a certain fraction of elongating RNA polymerases that pass through, resulting in locked ternary complexes. Cleavage of the nascent transcript by cleavage factors such as GreA or GreB allows the resumption of elongation from the new 3'terminus. GreB releases sequences of up to 9 nucleotides in length. This chain is Transcription elongation factor GreB, found in Pasteurella multocida (strain Pm70).